Reading from the N-terminus, the 495-residue chain is Aspartyl/glutamyl-tRNA(Asn/Gln) amidotransferase subunit B (495 aa).

Belongs to the GatB/GatE family. GatB subfamily. In terms of assembly, heterotrimer of A, B and C subunits.

It catalyses the reaction L-glutamyl-tRNA(Gln) + L-glutamine + ATP + H2O = L-glutaminyl-tRNA(Gln) + L-glutamate + ADP + phosphate + H(+). The enzyme catalyses L-aspartyl-tRNA(Asn) + L-glutamine + ATP + H2O = L-asparaginyl-tRNA(Asn) + L-glutamate + ADP + phosphate + 2 H(+). Allows the formation of correctly charged Asn-tRNA(Asn) or Gln-tRNA(Gln) through the transamidation of misacylated Asp-tRNA(Asn) or Glu-tRNA(Gln) in organisms which lack either or both of asparaginyl-tRNA or glutaminyl-tRNA synthetases. The reaction takes place in the presence of glutamine and ATP through an activated phospho-Asp-tRNA(Asn) or phospho-Glu-tRNA(Gln). The chain is Aspartyl/glutamyl-tRNA(Asn/Gln) amidotransferase subunit B from Beijerinckia indica subsp. indica (strain ATCC 9039 / DSM 1715 / NCIMB 8712).